We begin with the raw amino-acid sequence, 166 residues long: Transcription antitermination protein NusB (166 aa).

The segment covering 1-18 has biased composition (basic and acidic residues); sequence MISDESDRFNPRDPKPAD. Positions 1–28 are disordered; that stretch reads MISDESDRFNPRDPKPADAGKPSKSAKR.

The protein belongs to the NusB family.

Its function is as follows. Involved in transcription antitermination. Required for transcription of ribosomal RNA (rRNA) genes. Binds specifically to the boxA antiterminator sequence of the ribosomal RNA (rrn) operons. This is Transcription antitermination protein NusB from Pseudomonas putida (strain GB-1).